Reading from the N-terminus, the 251-residue chain is Flap endonuclease Xni (251 aa).

Asp104 contributes to the Mg(2+) binding site. The 90-residue stretch at 160–249 (VLPRQLPDYW…IDGNLQQLRL (90 aa)) folds into the 5'-3' exonuclease domain. Residues Leu171, Ala172, Pro180, Val182, and Ile185 each coordinate K(+). The tract at residues 184–189 (GIGPKS) is interaction with DNA.

It belongs to the Xni family. It depends on Mg(2+) as a cofactor. The cofactor is K(+).

Functionally, has flap endonuclease activity. During DNA replication, flap endonucleases cleave the 5'-overhanging flap structure that is generated by displacement synthesis when DNA polymerase encounters the 5'-end of a downstream Okazaki fragment. The chain is Flap endonuclease Xni from Salmonella paratyphi A (strain ATCC 9150 / SARB42).